We begin with the raw amino-acid sequence, 334 residues long: Ornithine carbamoyltransferase (334 aa).

Residues 57 to 60 (STRT), arginine 108, and 135 to 138 (HPTQ) contribute to the carbamoyl phosphate site. Residues asparagine 168, aspartate 232, and 236-237 (SM) each bind L-ornithine. Carbamoyl phosphate is bound by residues 274–275 (CL) and arginine 321.

Belongs to the aspartate/ornithine carbamoyltransferase superfamily. OTCase family.

The protein localises to the cytoplasm. It catalyses the reaction carbamoyl phosphate + L-ornithine = L-citrulline + phosphate + H(+). The protein operates within amino-acid biosynthesis; L-arginine biosynthesis; L-arginine from L-ornithine and carbamoyl phosphate: step 1/3. Functionally, reversibly catalyzes the transfer of the carbamoyl group from carbamoyl phosphate (CP) to the N(epsilon) atom of ornithine (ORN) to produce L-citrulline. The chain is Ornithine carbamoyltransferase from Cutibacterium acnes (strain DSM 16379 / KPA171202) (Propionibacterium acnes).